The following is a 697-amino-acid chain: Semaphorin-2A (697 aa).

The signal sequence occupies residues 1-20 (MAAKLWNLLLVAASVHLVGS). One can recognise a Sema domain in the interval 21 to 493 (VEQLHQDLIH…SDNIVRQIEL (473 aa)). N-linked (GlcNAc...) asparagine glycosylation is found at asparagine 63 and asparagine 66. A disulfide bridge connects residues cysteine 87 and cysteine 98. N-linked (GlcNAc...) asparagine glycosylation is found at asparagine 132, asparagine 198, and asparagine 283. Intrachain disulfides connect cysteine 260-cysteine 367 and cysteine 284-cysteine 326. N-linked (GlcNAc...) asparagine glycosylation occurs at asparagine 369. Intrachain disulfides connect cysteine 496/cysteine 512 and cysteine 506/cysteine 521. The Ig-like C2-type domain occupies 526–634 (PGLLQDVTNT…LCSYNITVDA (109 aa)). Asparagine 534, asparagine 629, and asparagine 679 each carry an N-linked (GlcNAc...) asparagine glycan. Cysteine 618 and cysteine 654 are joined by a disulfide. A compositionally biased stretch (polar residues) spans 673 to 685 (QCSTKQNNSNQKT). The segment at 673–697 (QCSTKQNNSNQKTHPNDIFHSNPVA) is disordered.

Belongs to the semaphorin family. As to expression, expressed in a gradient in the developing limb bud epithelium during Ti pioneer axon outgrowth.

Its subcellular location is the secreted. Acts as a chemorepulsive guidance molecule critical for axon fasciculation and for determining both the initial direction and subsequent pathfinding events of the Ti axon projection. This chain is Semaphorin-2A (SEMA-2A), found in Schistocerca gregaria (Desert locust).